We begin with the raw amino-acid sequence, 329 residues long: MTGNAGEWCLMESDPGVFTELIKGFGCRGAQVEEIWSLEPENFEKLKPVHGLIFLFKWQPGEEPAGSVVQDSRLDTIFFAKQVINNACATQAIVSVLLNCTHQDVHLGETLSEFKEFSQSFDAAMKGLALSNSDVIRQVHNSFARQQMFEFDTKTSAKEEDAFHFVSYVPVNGRLYELDGLREGPIDLGACNQDDWISAVRPVIEKRIQKYSEGEIRFNLMAIVSDRKMIYEQKIAELQRQLAEEEPMDTDQGNSMLSAIQSEVAKNQMLIEEEVQKLKRYKIENIRRKHNYLPFIMELLKTLAEHQQLIPLVEKAKEKQNAKKAQETK.

One can recognise a UCH catalytic domain in the interval 7-225; the sequence is EWCLMESDPG…IRFNLMAIVS (219 aa). K47 bears the N6-succinyllysine mark. Catalysis depends on C88, which acts as the Nucleophile. K158 carries the post-translational modification N6-acetyllysine. The Proton donor role is filled by H164. An N6-succinyllysine modification is found at K289. Residues 291–319 enclose the ULD domain; that stretch reads NYLPFIMELLKTLAEHQQLIPLVEKAKEK. The interval 313–329 is interaction with ADRM1; sequence VEKAKEKQNAKKAQETK.

The protein belongs to the peptidase C12 family. As to quaternary structure, component of the 19S (PA700) regulatory complex of the 26S proteasome. Interacts with ADRM1 and NFRKB; in vitro ADRM1 and NFRKB compete for interaction with UCHL5. Component of the INO80 complex; specifically part of a complex module associated with N-terminus of INO80.

It localises to the cytoplasm. It is found in the nucleus. It carries out the reaction Thiol-dependent hydrolysis of ester, thioester, amide, peptide and isopeptide bonds formed by the C-terminal Gly of ubiquitin (a 76-residue protein attached to proteins as an intracellular targeting signal).. Activated by ADRM1. Inhibited by interaction with NFRKB. Functionally, protease that specifically cleaves 'Lys-48'-linked polyubiquitin chains. Deubiquitinating enzyme associated with the 19S regulatory subunit of the 26S proteasome. Putative regulatory component of the INO80 complex; however is inactive in the INO80 complex and is activated by a transient interaction of the INO80 complex with the proteasome via ADRM1. The sequence is that of Ubiquitin carboxyl-terminal hydrolase isozyme L5 (UCHL5) from Homo sapiens (Human).